Reading from the N-terminus, the 155-residue chain is Ribosomal RNA large subunit methyltransferase H (155 aa).

S-adenosyl-L-methionine is bound by residues L73, G104, and 123–128 (LSPLTL).

This sequence belongs to the RNA methyltransferase RlmH family. As to quaternary structure, homodimer.

The protein localises to the cytoplasm. The enzyme catalyses pseudouridine(1915) in 23S rRNA + S-adenosyl-L-methionine = N(3)-methylpseudouridine(1915) in 23S rRNA + S-adenosyl-L-homocysteine + H(+). In terms of biological role, specifically methylates the pseudouridine at position 1915 (m3Psi1915) in 23S rRNA. This chain is Ribosomal RNA large subunit methyltransferase H, found in Pseudomonas aeruginosa (strain LESB58).